A 361-amino-acid polypeptide reads, in one-letter code: Biotin synthase (361 aa).

The Radical SAM core domain maps to 63-290 (NTVQLSTLLS…RAMVRLSAGR (228 aa)). The [4Fe-4S] cluster site is built by Cys78, Cys82, and Cys85. 4 residues coordinate [2Fe-2S] cluster: Cys122, Cys153, Cys213, and Arg285.

It belongs to the radical SAM superfamily. Biotin synthase family. Homodimer. [4Fe-4S] cluster serves as cofactor. [2Fe-2S] cluster is required as a cofactor.

It carries out the reaction (4R,5S)-dethiobiotin + (sulfur carrier)-SH + 2 reduced [2Fe-2S]-[ferredoxin] + 2 S-adenosyl-L-methionine = (sulfur carrier)-H + biotin + 2 5'-deoxyadenosine + 2 L-methionine + 2 oxidized [2Fe-2S]-[ferredoxin]. Its pathway is cofactor biosynthesis; biotin biosynthesis; biotin from 7,8-diaminononanoate: step 2/2. Catalyzes the conversion of dethiobiotin (DTB) to biotin by the insertion of a sulfur atom into dethiobiotin via a radical-based mechanism. This Paraburkholderia phytofirmans (strain DSM 17436 / LMG 22146 / PsJN) (Burkholderia phytofirmans) protein is Biotin synthase.